The chain runs to 503 residues: REST corepressor 2 (503 aa).

Positions 1–62 (MPSVMEKSHG…IPECKPDNTS (62 aa)) are disordered. The region spanning 41-126 (SMIRVGSDYQ…RSLADLANFT (86 aa)) is the ELM2 domain. The SANT 1 domain occupies 127–178 (PFPEEWSVEDKVLFEQAFSFHGKSFQRIQQMLPEKLIPSLVKYYYSWKKTRS). Coiled coils occupy residues 182-206 (VMDR…DQIK) and 286-314 (QLET…SLEG). Residues 327 to 378 (KLNARWTTDEQLLAVQAVRKYGKDFQAISEVLGNKTPSQVKTFFISYRRRFN) enclose the SANT 2 domain. The disordered stretch occupies residues 385–503 (EWEAEQEPSP…VGSHAESTFS (119 aa)). A compositionally biased stretch (polar residues) spans 399–412 (TDMSNKTSGSSQTP). Over residues 423–442 (SVSSSSQPAPPAAAAAASLS) the composition is skewed to low complexity.

The protein belongs to the CoREST family.

The protein resides in the nucleus. May act as a component of a corepressor complex that represses transcription. The sequence is that of REST corepressor 2 (rcor2) from Xenopus laevis (African clawed frog).